The chain runs to 284 residues: Bifunctional protein FolD (284 aa).

NADP(+) is bound by residues 165-167, Ser190, and Val231; that span reads GRS.

It belongs to the tetrahydrofolate dehydrogenase/cyclohydrolase family. Homodimer.

It catalyses the reaction (6R)-5,10-methylene-5,6,7,8-tetrahydrofolate + NADP(+) = (6R)-5,10-methenyltetrahydrofolate + NADPH. The enzyme catalyses (6R)-5,10-methenyltetrahydrofolate + H2O = (6R)-10-formyltetrahydrofolate + H(+). It participates in one-carbon metabolism; tetrahydrofolate interconversion. Its function is as follows. Catalyzes the oxidation of 5,10-methylenetetrahydrofolate to 5,10-methenyltetrahydrofolate and then the hydrolysis of 5,10-methenyltetrahydrofolate to 10-formyltetrahydrofolate. This Brevibacillus brevis (strain 47 / JCM 6285 / NBRC 100599) protein is Bifunctional protein FolD.